The following is a 1621-amino-acid chain: ALK tyrosine kinase receptor (1621 aa).

A signal peptide spans 1 to 18 (MGAAGFLWLLPPLLLAAA). Over 19-1042 (SYSGAATDQR…PHLPLSLILS (1024 aa)) the chain is Extracellular. The segment at 48–70 (RLQRKSLAVDFVVPSLFRVYARD) is heparin-binding region. N-linked (GlcNAc...) asparagine glycans are attached at residues N174, N248, N289, N328, N415, N428, N449, N567, N575, N631, and N673. The 164-residue stretch at 268-431 (LECSFDFPCE…DFFALKNCSE (164 aa)) folds into the MAM 1 domain. One can recognise an LDL-receptor class A domain in the interval 441–477 (LQSSFTCWNGTVLQLGQACDFHQDCAQGEDEGQLCSK). Residues 482 to 640 (FYCNFENGFC…NISISLDCYL (159 aa)) enclose the MAM 2 domain. Cysteines 692 and 705 form a disulfide. N713 carries an N-linked (GlcNAc...) asparagine glycan. A disulfide bond links C787 and C798. Residues N812, N868, and N890 are each glycosylated (N-linked (GlcNAc...) asparagine). A disulfide bridge links C910 with C932. An N-linked (GlcNAc...) asparagine glycan is attached at N990. 3 disulfides stabilise this stretch: C991–C999, C994–C1010, and C1012–C1025. Residues 991–1029 (CSHCEVDECHMDPESHKVICFCDHGTVLADDGVSCIVSP) are EGF-like. The helical transmembrane segment at 1043–1063 (VVTSALVAALVLAFSGIMIVY) threads the bilayer. Residues 1064–1621 (RRKHQELQAM…SKNKVTQPGP (558 aa)) are Cytoplasmic-facing. Phosphotyrosine occurs at positions 1082, 1096, and 1100. Positions 1120 to 1396 (ITLIRGLGHG…IEYCTQDPDV (277 aa)) constitute a Protein kinase domain. Residues 1126–1134 (LGHGAFGEV) and H1128 contribute to the ATP site. A Phosphotyrosine modification is found at Y1135. ATP contacts are provided by residues K1154 and 1201-1203 (ELM). Catalysis depends on D1253, which acts as the Proton acceptor. ATP is bound at residue D1274. The residue at position 1282 (Y1282) is a Phosphotyrosine. Residues 1412-1556 (EEKVPMRPKD…WTGPGAGPRR (145 aa)) form a disordered region. Residues 1414-1423 (KVPMRPKDPE) are compositionally biased toward basic and acidic residues. Residues 1441–1461 (SAAPQPAALTAPGPSVKKPPG) are compositionally biased toward low complexity. Residues 1462–1472 (AGAGAGAGAGA) are compositionally biased toward gly residues. A compositionally biased stretch (polar residues) spans 1506-1518 (NKPTSLWNPTYGS). At Y1516 the chain carries Phosphotyrosine. Residues 1543–1552 (AEGGWTGPGA) are compositionally biased toward gly residues.

The protein belongs to the protein kinase superfamily. Tyr protein kinase family. Insulin receptor subfamily. In terms of assembly, homodimer; homodimerizes following heparin- and ligand-binding. Interacts with CBL, IRS1, PIK3R1 and PLCG1. Interacts with FRS2 and SHC1. Interacts with PTN and MDK. Phosphorylated at tyrosine residues by autocatalysis, which activates kinase activity. In cells not stimulated by a ligand, receptor protein tyrosine phosphatase beta and zeta complex (PTPRB/PTPRZ1) dephosphorylates ALK at the sites in ALK that are undergoing autophosphorylation through autoactivation. Mainly expressed in central nervous system (CNS) and other parts of the brain such as the paraventricular nucleus (PVN) of the hypothalamus. Expression is also found in peripheral nervous systems, eye, nasal epithelium, olfactory nerve, tongue, skin, tissue surrounding the esophagus, stomach, midgut, as well as testis and ovary.

It is found in the cell membrane. The enzyme catalyses L-tyrosyl-[protein] + ATP = O-phospho-L-tyrosyl-[protein] + ADP + H(+). Activated upon ALKAL2 ligand-binding. ALKAL2-driven activation is coupled with heparin-binding. Following ligand-binding, homodimerizes and autophosphorylates, activating its kinase activity. Inactivated through dephosphorylation by receptor protein tyrosine phosphatase beta and zeta complex (PTPRB/PTPRZ1) when there is no stimulation by a ligand. Neuronal receptor tyrosine kinase that is essentially and transiently expressed in specific regions of the central and peripheral nervous systems and plays an important role in the genesis and differentiation of the nervous system. Also acts as a key thinness protein involved in the resistance to weight gain: in hypothalamic neurons, controls energy expenditure acting as a negative regulator of white adipose tissue lipolysis and sympathetic tone to fine-tune energy homeostasis. Following activation by ALKAL2 ligand at the cell surface, transduces an extracellular signal into an intracellular response. In contrast, ALKAL1 is not a potent physiological ligand for ALK. Ligand-binding to the extracellular domain induces tyrosine kinase activation, leading to activation of the mitogen-activated protein kinase (MAPK) pathway. Phosphorylates almost exclusively at the first tyrosine of the Y-x-x-x-Y-Y motif. Induces tyrosine phosphorylation of CBL, FRS2, IRS1 and SHC1, as well as of the MAP kinases MAPK1/ERK2 and MAPK3/ERK1. ALK activation may also be regulated by pleiotrophin (PTN) and midkine (MDK). PTN-binding induces MAPK pathway activation, which is important for the anti-apoptotic signaling of PTN and regulation of cell proliferation. MDK-binding induces phosphorylation of the ALK target insulin receptor substrate (IRS1), activates mitogen-activated protein kinases (MAPKs) and PI3-kinase, resulting also in cell proliferation induction. Drives NF-kappa-B activation, probably through IRS1 and the activation of the AKT serine/threonine kinase. Recruitment of IRS1 to activated ALK and the activation of NF-kappa-B are essential for the autocrine growth and survival signaling of MDK. The protein is ALK tyrosine kinase receptor of Mus musculus (Mouse).